Here is a 424-residue protein sequence, read N- to C-terminus: tRNA(Ile)-lysidine synthase (424 aa).

26–31 contacts ATP; the sequence is SGGIDS.

This sequence belongs to the tRNA(Ile)-lysidine synthase family.

Its subcellular location is the cytoplasm. The catalysed reaction is cytidine(34) in tRNA(Ile2) + L-lysine + ATP = lysidine(34) in tRNA(Ile2) + AMP + diphosphate + H(+). Functionally, ligates lysine onto the cytidine present at position 34 of the AUA codon-specific tRNA(Ile) that contains the anticodon CAU, in an ATP-dependent manner. Cytidine is converted to lysidine, thus changing the amino acid specificity of the tRNA from methionine to isoleucine. This chain is tRNA(Ile)-lysidine synthase, found in Streptococcus agalactiae serotype V (strain ATCC BAA-611 / 2603 V/R).